The following is a 321-amino-acid chain: Large ribosomal RNA subunit accumulation protein YCED homolog 1, chloroplastic (321 aa).

Residues 1–32 (MSLVCSLSCVAPLPQTKQSRPSFLKLETCTLS) constitute a chloroplast transit peptide.

The protein belongs to the DUF177 domain family.

Its subcellular location is the plastid. The protein localises to the chloroplast stroma. It is found in the chloroplast nucleoid. Its function is as follows. Plays a role in synthesis, processing and/or stability of 23S rRNA. Required for embryogenesis. In Arabidopsis thaliana (Mouse-ear cress), this protein is Large ribosomal RNA subunit accumulation protein YCED homolog 1, chloroplastic.